We begin with the raw amino-acid sequence, 264 residues long: Type III pantothenate kinase 2 (264 aa).

6–13 (DVGNTFTV) serves as a coordination point for ATP. Substrate is bound by residues tyrosine 100 and 107-110 (GADR). The Proton acceptor role is filled by aspartate 109. Residue aspartate 129 coordinates K(+). An ATP-binding site is contributed by threonine 132. Threonine 184 lines the substrate pocket.

The protein belongs to the type III pantothenate kinase family. As to quaternary structure, homodimer. The cofactor is NH4(+). Requires K(+) as cofactor.

It localises to the cytoplasm. It carries out the reaction (R)-pantothenate + ATP = (R)-4'-phosphopantothenate + ADP + H(+). It functions in the pathway cofactor biosynthesis; coenzyme A biosynthesis; CoA from (R)-pantothenate: step 1/5. Catalyzes the phosphorylation of pantothenate (Pan), the first step in CoA biosynthesis. This chain is Type III pantothenate kinase 2, found in Symbiobacterium thermophilum (strain DSM 24528 / JCM 14929 / IAM 14863 / T).